The chain runs to 235 residues: Ubiquinone biosynthesis O-methyltransferase (235 aa).

4 residues coordinate S-adenosyl-L-methionine: Arg-39, Gly-59, Asp-80, and Met-124.

Belongs to the methyltransferase superfamily. UbiG/COQ3 family.

The enzyme catalyses a 3-demethylubiquinol + S-adenosyl-L-methionine = a ubiquinol + S-adenosyl-L-homocysteine + H(+). It carries out the reaction a 3-(all-trans-polyprenyl)benzene-1,2-diol + S-adenosyl-L-methionine = a 2-methoxy-6-(all-trans-polyprenyl)phenol + S-adenosyl-L-homocysteine + H(+). It participates in cofactor biosynthesis; ubiquinone biosynthesis. Its function is as follows. O-methyltransferase that catalyzes the 2 O-methylation steps in the ubiquinone biosynthetic pathway. This is Ubiquinone biosynthesis O-methyltransferase from Vibrio parahaemolyticus serotype O3:K6 (strain RIMD 2210633).